The following is an 84-amino-acid chain: U4-theraphotoxin-Hhn1a (84 aa).

Residues 1–22 (MKVTLIAILTCAAVLVLHTTAA) form the signal peptide. A propeptide spanning residues 23–47 (EELEESQLMEVGMPDTELAAVDGER) is cleaved from the precursor. 3 cysteine pairs are disulfide-bonded: Cys-51-Cys-65, Cys-55-Cys-76, and Cys-70-Cys-81.

Belongs to the neurotoxin 12 (Hwtx-2) family. 02 (Hwtx-2) subfamily. In terms of tissue distribution, expressed by the venom gland.

It localises to the secreted. Functionally, postsynaptic neurotoxin. The chain is U4-theraphotoxin-Hhn1a from Cyriopagopus hainanus (Chinese bird spider).